The following is a 197-amino-acid chain: Elongation factor Ts (197 aa).

The segment at 81-84 (TDFV) is involved in Mg(2+) ion dislocation from EF-Tu.

This sequence belongs to the EF-Ts family.

It is found in the cytoplasm. Functionally, associates with the EF-Tu.GDP complex and induces the exchange of GDP to GTP. It remains bound to the aminoacyl-tRNA.EF-Tu.GTP complex up to the GTP hydrolysis stage on the ribosome. In Fervidobacterium nodosum (strain ATCC 35602 / DSM 5306 / Rt17-B1), this protein is Elongation factor Ts.